The following is a 472-amino-acid chain: Citrate synthase, mitochondrial (472 aa).

Residues H308, H354, and D409 contribute to the active site.

It belongs to the citrate synthase family. In terms of assembly, homodimer.

It localises to the mitochondrion matrix. The catalysed reaction is oxaloacetate + acetyl-CoA + H2O = citrate + CoA + H(+). The protein operates within carbohydrate metabolism; tricarboxylic acid cycle; isocitrate from oxaloacetate: step 1/2. The protein is Citrate synthase, mitochondrial (CS) of Daucus carota (Wild carrot).